The primary structure comprises 640 residues: Choline O-acetyltransferase (640 aa).

Phosphoserine is present on Ser-17. His-334 (proton acceptor) is an active-site residue. Ser-365 is subject to Phosphoserine. Residues 412–424 (GKTF…YSPD), Ser-450, and Gln-551 contribute to the CoA site. The disordered stretch occupies residues 614–640 (CSSRQPADSKPPAPKEKARGPSQAKQS).

The protein belongs to the carnitine/choline acetyltransferase family. As to quaternary structure, monomer.

It carries out the reaction choline + acetyl-CoA = acetylcholine + CoA. Catalyzes the reversible synthesis of acetylcholine (ACh) from acetyl CoA and choline at cholinergic synapses. The polypeptide is Choline O-acetyltransferase (Chat) (Rattus norvegicus (Rat)).